Here is a 528-residue protein sequence, read N- to C-terminus: uncharacterized protein (528 aa).

The interval 1 to 51 is disordered; it reads MEHPKRPTPKNEALHIDASGRGESSFSVHRSHSGGHEPFAPSPGSSIGASV. 2 consecutive repeat copies span residues 185–213 and 285–313. Residues 185-313 are 2 X 29 AA repeats; the sequence is EQEEEYISNS…EEKRKLQQAL (129 aa). Disordered stretches follow at residues 467-497 and 509-528; these read RAHG…NNDT and TVHP…DSHY. Polar residues predominate over residues 472 to 496; that stretch reads SPPTVVVQPSTSRAGSNSTANINND.

This is an uncharacterized protein from Caenorhabditis elegans.